We begin with the raw amino-acid sequence, 198 residues long: Recombination protein RecR (198 aa).

Residues 57-72 (CSICGNLTDQDPCAIC) form a C4-type zinc finger. The Toprim domain occupies 80 to 175 (STILIVEDSR…KVTRLARGLA (96 aa)).

Belongs to the RecR family.

In terms of biological role, may play a role in DNA repair. It seems to be involved in an RecBC-independent recombinational process of DNA repair. It may act with RecF and RecO. This is Recombination protein RecR from Streptococcus suis (strain 05ZYH33).